The primary structure comprises 270 residues: uncharacterized protein (270 aa).

A signal peptide spans 1–23 (MFNFITFILFAVVCISYCHKSRG). N-linked (GlcNAc...) asparagine glycosylation is found at Asn-246 and Asn-252.

It localises to the secreted. This is an uncharacterized protein from Caenorhabditis elegans.